The sequence spans 311 residues: Cell division protein FtsQ (311 aa).

The segment at 1–28 is disordered; the sequence is MTTRSPARPLIARRSTPAPTPAPHDPAP. Residues 1-46 lie on the Cytoplasmic side of the membrane; sequence MTTRSPARPLIARRSTPAPTPAPHDPAPSRLSYRVTRLWLTPIFRK. Residues 47 to 67 form a helical membrane-spanning segment; the sequence is ALHLGIPVFALFAAVTWYLGD. Over 68 to 311 the chain is Periplasmic; that stretch reads ETRVAELFEA…AERPDGDTRG (244 aa). Residues 91 to 159 enclose the POTRA domain; sequence FRVNVLGIDG…GYLAVRIDER (69 aa).

This sequence belongs to the FtsQ/DivIB family. FtsQ subfamily.

Its subcellular location is the cell inner membrane. Its function is as follows. Essential cell division protein. The protein is Cell division protein FtsQ of Jannaschia sp. (strain CCS1).